A 332-amino-acid polypeptide reads, in one-letter code: tRNA N6-adenosine threonylcarbamoyltransferase (332 aa).

The Fe cation site is built by His107 and His111. Substrate-binding positions include 129 to 133, Asp162, Gly175, and Asn267; that span reads LVSGG. Asp295 is a binding site for Fe cation.

This sequence belongs to the KAE1 / TsaD family. The cofactor is Fe(2+).

The protein localises to the cytoplasm. It carries out the reaction L-threonylcarbamoyladenylate + adenosine(37) in tRNA = N(6)-L-threonylcarbamoyladenosine(37) in tRNA + AMP + H(+). Required for the formation of a threonylcarbamoyl group on adenosine at position 37 (t(6)A37) in tRNAs that read codons beginning with adenine. Is involved in the transfer of the threonylcarbamoyl moiety of threonylcarbamoyl-AMP (TC-AMP) to the N6 group of A37, together with TsaE and TsaB. TsaD likely plays a direct catalytic role in this reaction. The polypeptide is tRNA N6-adenosine threonylcarbamoyltransferase (Campylobacter hominis (strain ATCC BAA-381 / DSM 21671 / CCUG 45161 / LMG 19568 / NCTC 13146 / CH001A)).